Reading from the N-terminus, the 202-residue chain is MNRLFLILLLIFSHEVFSQTSAEVLQSKLNAIQTMTANFSQIVKAKNREVSRSSGSMALQRPGRFRWQTKDPLEQLIVADGQKMWIYDVDLEQVTVKNQEKGLGGTAALFLSGYDETLTHDFDVSEKQKGKLTVFDLKSKSAKENFQRIKLIFSQSTLIGLELYDQLGQITDVKLVQIKSNPKLPAKLFQFNPPKGVDVVKQ.

The first 18 residues, 1–18, serve as a signal peptide directing secretion; sequence MNRLFLILLLIFSHEVFS.

It belongs to the LolA family. As to quaternary structure, monomer.

It is found in the periplasm. Functionally, participates in the translocation of lipoproteins from the inner membrane to the outer membrane. Only forms a complex with a lipoprotein if the residue after the N-terminal Cys is not an aspartate (The Asp acts as a targeting signal to indicate that the lipoprotein should stay in the inner membrane). In Legionella pneumophila (strain Lens), this protein is Outer-membrane lipoprotein carrier protein.